An 86-amino-acid polypeptide reads, in one-letter code: MTEGRRRQFKVGRVVSNKMQKTVVVAVDYLKPHPLYRKIVRRTSKFHAHDEQQCQIGDVVRIGETRPLSKTKRWEVVEIIKRNEEA.

Belongs to the universal ribosomal protein uS17 family. In terms of assembly, part of the 30S ribosomal subunit.

Functionally, one of the primary rRNA binding proteins, it binds specifically to the 5'-end of 16S ribosomal RNA. The sequence is that of Small ribosomal subunit protein uS17 from Roseiflexus castenholzii (strain DSM 13941 / HLO8).